The following is a 298-amino-acid chain: Ribosomal protein L11 methyltransferase (298 aa).

Positions 152, 173, 195, and 234 each coordinate S-adenosyl-L-methionine.

This sequence belongs to the methyltransferase superfamily. PrmA family.

The protein resides in the cytoplasm. It carries out the reaction L-lysyl-[protein] + 3 S-adenosyl-L-methionine = N(6),N(6),N(6)-trimethyl-L-lysyl-[protein] + 3 S-adenosyl-L-homocysteine + 3 H(+). Its function is as follows. Methylates ribosomal protein L11. This chain is Ribosomal protein L11 methyltransferase, found in Ralstonia nicotianae (strain ATCC BAA-1114 / GMI1000) (Ralstonia solanacearum).